We begin with the raw amino-acid sequence, 95 residues long: Small ribosomal subunit protein bS18 (95 aa).

Belongs to the bacterial ribosomal protein bS18 family. In terms of assembly, part of the 30S ribosomal subunit. Forms a tight heterodimer with protein bS6.

Its function is as follows. Binds as a heterodimer with protein bS6 to the central domain of the 16S rRNA, where it helps stabilize the platform of the 30S subunit. This is Small ribosomal subunit protein bS18 from Ehrlichia ruminantium (strain Gardel).